Consider the following 107-residue polypeptide: Guanine nucleotide-binding protein G(I)/G(S)/G(O) subunit gamma-14 (107 aa).

The G protein gamma domain maps to 69–107 (KMAADLLKFCTEQAKNDPFLVGIPAATNSFKEKKPYAIL).

This sequence belongs to the G protein gamma family. G proteins are composed of 3 units; alpha, beta and gamma.

The protein localises to the cell membrane. Guanine nucleotide-binding proteins (G proteins) are involved as a modulator or transducer in various transmembrane signaling systems. The beta and gamma chains are required for the GTPase activity, for replacement of GDP by GTP, and for G protein-effector interaction. The chain is Guanine nucleotide-binding protein G(I)/G(S)/G(O) subunit gamma-14 from Homo sapiens (Human).